A 118-amino-acid chain; its full sequence is Large ribosomal subunit protein uL18 (118 aa).

It belongs to the universal ribosomal protein uL18 family. Part of the 50S ribosomal subunit; part of the 5S rRNA/L5/L18/L25 subcomplex. Contacts the 5S and 23S rRNAs.

This is one of the proteins that bind and probably mediate the attachment of the 5S RNA into the large ribosomal subunit, where it forms part of the central protuberance. The protein is Large ribosomal subunit protein uL18 of Campylobacter lari (strain RM2100 / D67 / ATCC BAA-1060).